A 179-amino-acid polypeptide reads, in one-letter code: MARLKEIYKKEIAPKLLKDLELKNPMEIPRITKITLNMGVGEALADKKVLENAVSDLEKIAGQKAVVTRARKSIAGFKVREGWPIGCKVTLRSDRMYEFLDRLISISIPRIRDFRGISPKQFDGRGNFSMGVSEQIIFPEIDYDKIDKLRGLDICISTTARNNDEGRALLKAFNFPFKG.

The protein belongs to the universal ribosomal protein uL5 family. In terms of assembly, part of the 50S ribosomal subunit; part of the 5S rRNA/L5/L18/L25 subcomplex. Contacts the 5S rRNA and the P site tRNA. Forms a bridge to the 30S subunit in the 70S ribosome.

Its function is as follows. This is one of the proteins that bind and probably mediate the attachment of the 5S RNA into the large ribosomal subunit, where it forms part of the central protuberance. In the 70S ribosome it contacts protein S13 of the 30S subunit (bridge B1b), connecting the 2 subunits; this bridge is implicated in subunit movement. Contacts the P site tRNA; the 5S rRNA and some of its associated proteins might help stabilize positioning of ribosome-bound tRNAs. The protein is Large ribosomal subunit protein uL5 of Saccharophagus degradans (strain 2-40 / ATCC 43961 / DSM 17024).